The primary structure comprises 374 residues: Guanine nucleotide-binding protein subunit alpha-15 (374 aa).

Residues 41–374 (GELKLLLLGT…ARYLDEINLL (334 aa)) form the G-alpha domain. Positions 44–57 (KLLLLGTGESGKST) are G1 motif. Residues 49-56 (GTGESGKS), 183-189 (LRSRMPT), 208-212 (DVGGQ), 277-280 (NKTD), and A346 contribute to the GTP site. Mg(2+) is bound by residues S56 and T189. The interval 181–189 (DVLRSRMPT) is G2 motif. Positions 204-213 (LRIVDVGGQK) are G3 motif. The interval 273 to 280 (ILFLNKTD) is G4 motif. The segment at 344 to 349 (TCATDT) is G5 motif.

Belongs to the G-alpha family. G(q) subfamily. In terms of assembly, g proteins are composed of 3 units; alpha, beta and gamma. The alpha chain contains the guanine nucleotide binding site.

In terms of biological role, guanine nucleotide-binding proteins (G proteins) are involved as modulators or transducers in various transmembrane signaling systems. The sequence is that of Guanine nucleotide-binding protein subunit alpha-15 (GNA15) from Oryctolagus cuniculus (Rabbit).